A 567-amino-acid polypeptide reads, in one-letter code: Septation ring formation regulator EzrA (567 aa).

Topologically, residues 1–2 (ME) are extracellular. A helical membrane pass occupies residues 3–21 (IAVIVLLLLGGVMIYNHVY). The Cytoplasmic portion of the chain corresponds to 22 to 567 (RKKMYSEIDR…IFRDERSKEE (546 aa)). 2 coiled-coil regions span residues 97-188 (RYAK…LTAS) and 254-465 (REIV…LEEK).

This sequence belongs to the EzrA family.

It localises to the cell membrane. Functionally, negative regulator of FtsZ ring formation; modulates the frequency and position of FtsZ ring formation. Inhibits FtsZ ring formation at polar sites. Interacts either with FtsZ or with one of its binding partners to promote depolymerization. This chain is Septation ring formation regulator EzrA, found in Geobacillus sp. (strain WCH70).